Consider the following 510-residue polypeptide: 2,3-bisphosphoglycerate-independent phosphoglycerate mutase (510 aa).

Positions 16 and 66 each coordinate Mn(2+). Catalysis depends on Ser66, which acts as the Phosphoserine intermediate. Residues His127, 156-157, Arg186, Arg192, 257-260, and Lys333 contribute to the substrate site; these read RD and RADR. Asp400, His404, Asp441, His442, and His460 together coordinate Mn(2+).

Belongs to the BPG-independent phosphoglycerate mutase family. As to quaternary structure, monomer. It depends on Mn(2+) as a cofactor.

The catalysed reaction is (2R)-2-phosphoglycerate = (2R)-3-phosphoglycerate. Its pathway is carbohydrate degradation; glycolysis; pyruvate from D-glyceraldehyde 3-phosphate: step 3/5. Catalyzes the interconversion of 2-phosphoglycerate and 3-phosphoglycerate. The chain is 2,3-bisphosphoglycerate-independent phosphoglycerate mutase from Gluconobacter oxydans (strain 621H) (Gluconobacter suboxydans).